Reading from the N-terminus, the 218-residue chain is Thiopurine S-methyltransferase (218 aa).

Residues tryptophan 10, leucine 45, glutamate 66, and arginine 123 each contribute to the S-adenosyl-L-methionine site.

It belongs to the class I-like SAM-binding methyltransferase superfamily. TPMT family.

The protein localises to the cytoplasm. It carries out the reaction S-adenosyl-L-methionine + a thiopurine = S-adenosyl-L-homocysteine + a thiopurine S-methylether.. The polypeptide is Thiopurine S-methyltransferase (Shewanella baltica (strain OS185)).